The primary structure comprises 88 residues: Sec-independent protein translocase protein TatA (88 aa).

The helical transmembrane segment at 1 to 21 (MGGISIWQLLIIAVIVVLLFG) threads the bilayer. The segment at 41–88 (KAMGDENQKETNNAEKTTNDADFDTKNLAQKTSTEEKSTTESKNKEQV) is disordered. Composition is skewed to basic and acidic residues over residues 42–65 (AMGDENQKETNNAEKTTNDADFDT) and 73–88 (STEEKSTTESKNKEQV).

Belongs to the TatA/E family. In terms of assembly, the Tat system comprises two distinct complexes: a TatABC complex, containing multiple copies of TatA, TatB and TatC subunits, and a separate TatA complex, containing only TatA subunits. Substrates initially bind to the TatABC complex, which probably triggers association of the separate TatA complex to form the active translocon.

The protein localises to the cell inner membrane. Its function is as follows. Part of the twin-arginine translocation (Tat) system that transports large folded proteins containing a characteristic twin-arginine motif in their signal peptide across membranes. TatA could form the protein-conducting channel of the Tat system. This chain is Sec-independent protein translocase protein TatA, found in Proteus mirabilis (strain HI4320).